The following is a 30-amino-acid chain: rRNA N-glycosylase (30 aa).

It belongs to the ribosome-inactivating protein family. Type 1 RIP subfamily. In terms of tissue distribution, expressed in seeds.

The enzyme catalyses Endohydrolysis of the N-glycosidic bond at one specific adenosine on the 28S rRNA.. Its function is as follows. Exhibits N-glycosylase activity. Catalyzes the release of one adenine from a ribosome. Acts as a ribosome-inactivating protein and inhibits protein synthesis in a rabbit-reticulocyte lysate system and in various cell lines (in vitro). This Saponaria ocymoides (Rock soapwort) protein is rRNA N-glycosylase.